The primary structure comprises 637 residues: MGSPRLAALLLSLPLLLIGLAVSARVACPCLRSWTSHCLLAYRVDKRFAGLQWGWFPLLVRKSKSPPKFEDYWRHRTPASFQRKLLGSPSLSEESHRISIPSSAISHRGQRTKRAQPSAAEGREHLPEAGSQKCGGPEFSFDLLPEVQAVRVTIPAGPKASVRLCYQWALECEDLSSPFDTQKIVSGGHTVDLPYEFLLPCMCIEASYLQEDTVRRKKCPFQSWPEAYGSDFWQSIRFTDYSQHNQMVMALTLRCPLKLEASLCWRQDPLTPCETLPNATAQESEGWYILENVDLHPQLCFKFSFENSSHVECPHQSGSLPSWTVSMDTQAQQLTLHFSSRTYATFSAAWSDPGLGPDTPMPPVYSISQTQGSVPVTLDLIIPFLRQENCILVWRSDVHFAWKHVLCPDVSHRHLGLLILALLALTALVGVVLVLLGRRLLPGSGRTRPVLLLHAADSEAQRRLVGALAELLRTALGGGRDVIVDLWEGTHVARIGPLPWLWAARERVAREQGTVLLLWNCAGPSTACSGDPQAASLRTLLCAAPRPLLLAYFSRLCAKGDIPRPLRALPRYRLLRDLPRLLRALDAQPATLASSWSHLGAKRCLKNRLEQCHLLELEAAKDDYQGSTNSPCGFSCL.

The first 23 residues, 1-23 (MGSPRLAALLLSLPLLLIGLAVS), serve as a signal peptide directing secretion. The Extracellular segment spans residues 24-414 (ARVACPCLRS…VLCPDVSHRH (391 aa)). The segment at 87-134 (GSPSLSEESHRISIPSSAISHRGQRTKRAQPSAAEGREHLPEAGSQKC) is disordered. Residues asparagine 278 and asparagine 307 are each glycosylated (N-linked (GlcNAc...) asparagine). Residues 415-435 (LGLLILALLALTALVGVVLVL) traverse the membrane as a helical segment. Topologically, residues 436 to 637 (LGRRLLPGSG…TNSPCGFSCL (202 aa)) are cytoplasmic. Residues 447–583 (TRPVLLLHAA…LLRDLPRLLR (137 aa)) form the SEFIR domain.

In terms of assembly, forms heterodimers with IL17RA; the heterodimer binds IL17C. In terms of tissue distribution, predominantly expressed in mucosal tissues, including trachea, lung, kidney and stomach. Highly expressed in colon epithelial cells. Also expressed in testis. Low expression, if any, in heart, liver, spleen, or brain. Among CD4 T-helper cells, expressed at high levels in Th17 cells.

The protein localises to the cell membrane. The protein resides in the secreted. Its subcellular location is the cytoplasm. In terms of biological role, specific functional receptor for IL17C, signaling through the NF-kappa-B and MAPK pathways. Requires TRAF3IP2 /ACT1 for signaling. Crucial regulator in innate immunity to bacterial pathogens, such as Citrobacter rodentium. Isoform 4 and isoform 5 may be either cytoplasmic inactive or dominant active forms. Isoform 2 and isoform 3 may act as soluble decoy receptors. This chain is Interleukin-17 receptor E (Il17re), found in Mus musculus (Mouse).